Here is a 79-residue protein sequence, read N- to C-terminus: Protein RALF-like 15 (79 aa).

The N-terminal stretch at 1–28 (MGMSKSIKVIVSLALILFLALAATKVEA) is a signal peptide. 2 cysteine pairs are disulfide-bonded: cysteine 46/cysteine 54 and cysteine 66/cysteine 72.

It belongs to the plant rapid alkalinization factor (RALF) family.

The protein resides in the secreted. In terms of biological role, cell signaling peptide that may regulate plant stress, growth, and development. Mediates a rapid alkalinization of extracellular space by mediating a transient increase in the cytoplasmic Ca(2+) concentration leading to a calcium-dependent signaling events through a cell surface receptor and a concomitant activation of some intracellular mitogen-activated protein kinases. This is Protein RALF-like 15 (RALFL15) from Arabidopsis thaliana (Mouse-ear cress).